The chain runs to 986 residues: Bifunctional glutamine synthetase adenylyltransferase/adenylyl-removing enzyme (986 aa).

An adenylyl removase region spans residues 1–482 (MVTTVISNVK…RYGRLFAGEE (482 aa)). Residues 486 to 986 (SRFGSLVFTG…RAAYEAVVKG (501 aa)) are adenylyl transferase.

This sequence belongs to the GlnE family. Mg(2+) is required as a cofactor.

The catalysed reaction is [glutamine synthetase]-O(4)-(5'-adenylyl)-L-tyrosine + phosphate = [glutamine synthetase]-L-tyrosine + ADP. It catalyses the reaction [glutamine synthetase]-L-tyrosine + ATP = [glutamine synthetase]-O(4)-(5'-adenylyl)-L-tyrosine + diphosphate. Its function is as follows. Involved in the regulation of glutamine synthetase GlnA, a key enzyme in the process to assimilate ammonia. When cellular nitrogen levels are high, the C-terminal adenylyl transferase (AT) inactivates GlnA by covalent transfer of an adenylyl group from ATP to specific tyrosine residue of GlnA, thus reducing its activity. Conversely, when nitrogen levels are low, the N-terminal adenylyl removase (AR) activates GlnA by removing the adenylyl group by phosphorolysis, increasing its activity. The regulatory region of GlnE binds the signal transduction protein PII (GlnB) which indicates the nitrogen status of the cell. The chain is Bifunctional glutamine synthetase adenylyltransferase/adenylyl-removing enzyme from Caulobacter vibrioides (strain ATCC 19089 / CIP 103742 / CB 15) (Caulobacter crescentus).